A 583-amino-acid chain; its full sequence is L-galactono-1,4-lactone dehydrogenase 1, mitochondrial (583 aa).

A mitochondrion-targeting transit peptide spans 1–36 (MRRLLLAGILRRASSSPSSHHHLHLVRALSASSPLP). Residues 37–78 (ASDADLRKYAGYALLLLGCGAATYYSFPLPPDALHKKAVPFK) constitute a propeptide, removed in mature form. A helical transmembrane segment spans residues 45 to 61 (YAGYALLLLGCGAATYY). An FAD-binding PCMH-type domain is found at 95-266 (THEVHTRVLL…AEVTLQCVER (172 aa)).

The cofactor is FAD.

It localises to the mitochondrion membrane. It carries out the reaction L-galactono-1,4-lactone + 4 Fe(III)-[cytochrome c] = L-dehydroascorbate + 4 Fe(II)-[cytochrome c] + 5 H(+). It participates in cofactor biosynthesis; L-ascorbate biosynthesis. Involved in the biosynthesis of ascorbic acid. The polypeptide is L-galactono-1,4-lactone dehydrogenase 1, mitochondrial (GLDH1) (Oryza sativa subsp. japonica (Rice)).